We begin with the raw amino-acid sequence, 141 residues long: MPLQIFNTTKRTIDEALLAEAIQLVIGEEGGKVGSIEAIYCGNKMIRRINRDFLNHDYATDTITFGYNEGGEVEGEFYISLDVIESNARRFGVMFEDELLRVTIHSALHLMGYDDETPELRIAMSRREDLYLDRIRGASNH.

H105, H109, and D115 together coordinate Zn(2+).

Belongs to the endoribonuclease YbeY family. Zn(2+) is required as a cofactor.

The protein localises to the cytoplasm. Single strand-specific metallo-endoribonuclease involved in late-stage 70S ribosome quality control and in maturation of the 3' terminus of the 16S rRNA. This is Endoribonuclease YbeY from Chlorobaculum parvum (strain DSM 263 / NCIMB 8327) (Chlorobium vibrioforme subsp. thiosulfatophilum).